Here is a 269-residue protein sequence, read N- to C-terminus: Phosphonoacetaldehyde hydrolase (269 aa).

Asp-10 acts as the Nucleophile in catalysis. Residues Asp-10 and Ala-12 each coordinate Mg(2+). Lys-52 serves as the catalytic Schiff-base intermediate with substrate. Asp-186 serves as a coordination point for Mg(2+).

The protein belongs to the HAD-like hydrolase superfamily. PhnX family. In terms of assembly, homodimer. The cofactor is Mg(2+).

The catalysed reaction is phosphonoacetaldehyde + H2O = acetaldehyde + phosphate + H(+). Involved in phosphonate degradation. The protein is Phosphonoacetaldehyde hydrolase of Klebsiella pneumoniae subsp. pneumoniae (strain ATCC 700721 / MGH 78578).